Consider the following 159-residue polypeptide: Ribosomal RNA large subunit methyltransferase H (159 aa).

Residues G108 and 127–132 each bind S-adenosyl-L-methionine; that span reads FGKLTM.

Belongs to the RNA methyltransferase RlmH family. Homodimer.

The protein resides in the cytoplasm. It catalyses the reaction pseudouridine(1915) in 23S rRNA + S-adenosyl-L-methionine = N(3)-methylpseudouridine(1915) in 23S rRNA + S-adenosyl-L-homocysteine + H(+). Functionally, specifically methylates the pseudouridine at position 1915 (m3Psi1915) in 23S rRNA. In Lactobacillus helveticus (strain DPC 4571), this protein is Ribosomal RNA large subunit methyltransferase H.